A 1208-amino-acid polypeptide reads, in one-letter code: MKSLAGHVVKYGKHRERRSFARISEVLELPNLIEIQTDSYQWFLDEGLREMFEDILPIDDFNGNLSLEFVDYELKEPKYTVAEARAHDANYSAPLHVTLRLTNRETGEIKAQEVFFGDFPLMTEQGTFIINGAERVIVSQLVRSPGVYFHGKVDKNGKEGFGSTVIPNRGAWLEMETDAKDISYVRIDRTRKIPLTVLVRALGFGSDDTIFEIFGDSETLRNTVEKDLHKNASDSRTEEGLKDVYERLRPGEPKTADSSRNLLNARFFDPKRYDLANVGRYKVNKKLDLKTRLLNLTLAETLVDPETGEIIVEKGTVLTHQVMETLAPFIENGLNSVTYYPSEDGVVTDPMTVQVIKVFSPKDPEREVNVIGNGYPEAPVKTVRPADIIASMSYFLNLMEGIGNVDDIDHLGNRRIRSVGELLQNQFRIGLARMERVVRERMSIQDTETLTPQQLINIRPVVASIKEFFGSSQLSQFMDQTNPLGELTHKRRLSALGPGGLTRDRAGYEVRDVHYSHYGRMCPIETPEGPNIGLINSLSSYAKVNKFGFIETPYRRVDRQTGRVTDQIDYLTADIEDHYIVAQANSPLNEDGTFAQDVVMARAQSENLEVSIDKVDYMDVSPKQVVAVATACIPFLENDDSNRALMGANMQRQAVPLINPQAPWVGTGMEYKSAHDSGAALLCKHDGVVEFVDASQIRVRRDNGALDKYDITKFRRSNSGTSYNQRPIVHLGEKVEKGDTLADGPSMEQGEMALGQNVLSVSMTWEGYNYEDAIIMSRRLVKDDVYTSIHIEEYESEARDTKLGPEEITREIPNVGEDALKDLDEMGIIRIGAEVKDGDLLVGKVTPKGVTELSAEERLLHAIFGEKAREVRDTSLRVPHGGGGIVHDVKIFTREAGDELSPGVNMLVRVYIVQKRKIHEGDKMAGRHGNKGVVSRIMPEEDMPFLPDGTPIDIMLNPLGVPSRMNIGQVLELHLGMAARQLGIHVATPVFDGASDEDVWETVREAGMASEAKTVLYDGRTGEPFDGRVSVGVMYMIKLAHMVDDKLHARSIGPYSLVTQQPLGGKAQFGGQRFGEMEVWALEAYGAAYTLQEILTSKSDDVVGRVKTYEAIVKGEPIPKPGVPESFRVLVKELQSLGLDMRVLDIKDAEIELRDMDDEDDDLITVDALTKFAEQQTAKELEKKAAEQVEDERQDVIQNFETAEDKLD.

It belongs to the RNA polymerase beta chain family. In terms of assembly, the RNAP catalytic core consists of 2 alpha, 1 beta, 1 beta' and 1 omega subunit. When a sigma factor is associated with the core the holoenzyme is formed, which can initiate transcription.

It catalyses the reaction RNA(n) + a ribonucleoside 5'-triphosphate = RNA(n+1) + diphosphate. In terms of biological role, DNA-dependent RNA polymerase catalyzes the transcription of DNA into RNA using the four ribonucleoside triphosphates as substrates. The sequence is that of DNA-directed RNA polymerase subunit beta from Enterococcus faecium (Streptococcus faecium).